Consider the following 185-residue polypeptide: Peptidyl-tRNA hydrolase (185 aa).

TRNA is bound at residue tyrosine 14. Histidine 19 (proton acceptor) is an active-site residue. TRNA contacts are provided by phenylalanine 63, asparagine 65, and asparagine 111.

Belongs to the PTH family. Monomer.

It is found in the cytoplasm. It catalyses the reaction an N-acyl-L-alpha-aminoacyl-tRNA + H2O = an N-acyl-L-amino acid + a tRNA + H(+). Hydrolyzes ribosome-free peptidyl-tRNAs (with 1 or more amino acids incorporated), which drop off the ribosome during protein synthesis, or as a result of ribosome stalling. In terms of biological role, catalyzes the release of premature peptidyl moieties from peptidyl-tRNA molecules trapped in stalled 50S ribosomal subunits, and thus maintains levels of free tRNAs and 50S ribosomes. In Desulfitobacterium hafniense (strain Y51), this protein is Peptidyl-tRNA hydrolase.